The primary structure comprises 504 residues: L-arabinose isomerase (504 aa).

Residues E308, E335, H352, and H452 each coordinate Mn(2+).

Belongs to the arabinose isomerase family. Mn(2+) is required as a cofactor.

The enzyme catalyses beta-L-arabinopyranose = L-ribulose. It functions in the pathway carbohydrate degradation; L-arabinose degradation via L-ribulose; D-xylulose 5-phosphate from L-arabinose (bacterial route): step 1/3. In terms of biological role, catalyzes the conversion of L-arabinose to L-ribulose. The protein is L-arabinose isomerase of Bifidobacterium adolescentis (strain ATCC 15703 / DSM 20083 / NCTC 11814 / E194a).